Here is a 207-residue protein sequence, read N- to C-terminus: Uracil phosphoribosyltransferase (207 aa).

5-phospho-alpha-D-ribose 1-diphosphate-binding positions include Arg77, Arg102, and Asp129–Ser137. Residues Ile192 and Gly197–Ala199 contribute to the uracil site. Asp198 contributes to the 5-phospho-alpha-D-ribose 1-diphosphate binding site.

It belongs to the UPRTase family. Requires Mg(2+) as cofactor.

It catalyses the reaction UMP + diphosphate = 5-phospho-alpha-D-ribose 1-diphosphate + uracil. The protein operates within pyrimidine metabolism; UMP biosynthesis via salvage pathway; UMP from uracil: step 1/1. Its activity is regulated as follows. Allosterically activated by GTP. Catalyzes the conversion of uracil and 5-phospho-alpha-D-ribose 1-diphosphate (PRPP) to UMP and diphosphate. This is Uracil phosphoribosyltransferase from Fervidobacterium nodosum (strain ATCC 35602 / DSM 5306 / Rt17-B1).